Reading from the N-terminus, the 394-residue chain is WAT1-related protein At2g40900 (394 aa).

The next 10 membrane-spanning stretches (helical) occupy residues 13-33 (FAMV…KTVL), 40-60 (YVLV…FALL), 67-87 (SKMT…GPVI), 102-122 (TFSS…ATLF), 142-162 (LVTV…INFF), 180-200 (AAVF…LQAA), 209-229 (LSMS…LAFV), 245-265 (LLAS…VQGL), 273-293 (VFVT…SFFV), and 298-318 (IYLG…AVLW). EamA domains follow at residues 22–147 (YAGM…TVVG) and 189–317 (LSWA…YAVL).

It belongs to the drug/metabolite transporter (DMT) superfamily. Plant drug/metabolite exporter (P-DME) (TC 2.A.7.4) family.

The protein resides in the membrane. This chain is WAT1-related protein At2g40900, found in Arabidopsis thaliana (Mouse-ear cress).